Consider the following 558-residue polypeptide: Urocanate hydratase (558 aa).

NAD(+) contacts are provided by residues 54–55 (GG), glutamine 132, 178–180 (GMG), glutamate 198, 244–245 (NA), 265–269 (QTSAH), 275–276 (YL), and tyrosine 324. Residue cysteine 412 is part of the active site. Position 494 (glycine 494) interacts with NAD(+).

It belongs to the urocanase family. NAD(+) serves as cofactor.

Its subcellular location is the cytoplasm. The enzyme catalyses 4-imidazolone-5-propanoate = trans-urocanate + H2O. The protein operates within amino-acid degradation; L-histidine degradation into L-glutamate; N-formimidoyl-L-glutamate from L-histidine: step 2/3. In terms of biological role, catalyzes the conversion of urocanate to 4-imidazolone-5-propionate. In Acinetobacter baumannii (strain SDF), this protein is Urocanate hydratase.